The primary structure comprises 475 residues: Arginine/ornithine antiporter (475 aa).

The next 12 helical transmembrane spans lie at 10–30 (IGLL…GVFG), 42–62 (GPVL…ALSL), 74–94 (GIFS…SGWG), 101–121 (LGNV…FPIF), 157–177 (LVTI…IVLF), 205–225 (NCMM…MLSA), 238–258 (ILGL…PYGY), 283–303 (WGGY…WLSW), 333–353 (PTFA…TLLF), 361–381 (AYSL…AYQI), 397–417 (LLIG…AGVS), and 451–471 (WLIT…VVSG).

It belongs to the amino acid-polyamine-organocation (APC) superfamily. Basic amino acid/polyamine antiporter (APA) (TC 2.A.3.2) family.

The protein localises to the cell membrane. It carries out the reaction L-ornithine(in) + L-arginine(out) = L-ornithine(out) + L-arginine(in). In terms of biological role, catalyzes electroneutral exchange between L-arginine and L-ornithine. The protein is Arginine/ornithine antiporter (arcD) of Latilactobacillus sakei (Lactobacillus sakei).